The primary structure comprises 171 residues: Galectin-related protein A (171 aa).

A Galectin domain is found at 38–170; sequence PFCGHIKGGL…INGDLQLTKL (133 aa).

Its function is as follows. Does not bind lactose, and may not bind carbohydrates. The chain is Galectin-related protein A (lgalsl-a) from Xenopus laevis (African clawed frog).